The following is a 254-amino-acid chain: Triosephosphate isomerase (254 aa).

Substrate is bound at residue 10–12; it reads NWK. Catalysis depends on H99, which acts as the Electrophile. The active-site Proton acceptor is E169. Substrate-binding positions include G175, S215, and 236 to 237; that span reads GG.

It belongs to the triosephosphate isomerase family. As to quaternary structure, homodimer.

The protein resides in the cytoplasm. The catalysed reaction is D-glyceraldehyde 3-phosphate = dihydroxyacetone phosphate. It functions in the pathway carbohydrate biosynthesis; gluconeogenesis. Its pathway is carbohydrate degradation; glycolysis; D-glyceraldehyde 3-phosphate from glycerone phosphate: step 1/1. In terms of biological role, involved in the gluconeogenesis. Catalyzes stereospecifically the conversion of dihydroxyacetone phosphate (DHAP) to D-glyceraldehyde-3-phosphate (G3P). In Chlamydia felis (strain Fe/C-56) (Chlamydophila felis), this protein is Triosephosphate isomerase.